The following is a 132-amino-acid chain: Lectin OAA (132 aa).

2 consecutive repeat copies span residues 1–66 (ALYN…TLLG) and 67–132 (NNSY…GTTL). The interval 1-132 (ALYNVENQWG…GPIGFKGTTL (132 aa)) is 2 X approximate tandem repeats.

Monomer.

Lectin specific for high mannose N-glycans, recognizes the branched moiety of these glycans. Does not recognize other types of N-glycans or monosaccharides. Agglutinates trypsin-treated rabbit erythrocytes. Does not require divalent cations for activity. Inhibits HIV replication in MT4 cells with an EC(50) of 45 nM. Binds to the HIV envelope glycoprotein gp120. In Planktothrix agardhii (Oscillatoria agardhii), this protein is Lectin OAA.